The following is a 261-amino-acid chain: Imidazole glycerol phosphate synthase subunit HisF (261 aa).

Active-site residues include Asp16 and Asp135.

This sequence belongs to the HisA/HisF family. In terms of assembly, heterodimer of HisH and HisF.

It localises to the cytoplasm. The catalysed reaction is 5-[(5-phospho-1-deoxy-D-ribulos-1-ylimino)methylamino]-1-(5-phospho-beta-D-ribosyl)imidazole-4-carboxamide + L-glutamine = D-erythro-1-(imidazol-4-yl)glycerol 3-phosphate + 5-amino-1-(5-phospho-beta-D-ribosyl)imidazole-4-carboxamide + L-glutamate + H(+). It functions in the pathway amino-acid biosynthesis; L-histidine biosynthesis; L-histidine from 5-phospho-alpha-D-ribose 1-diphosphate: step 5/9. In terms of biological role, IGPS catalyzes the conversion of PRFAR and glutamine to IGP, AICAR and glutamate. The HisF subunit catalyzes the cyclization activity that produces IGP and AICAR from PRFAR using the ammonia provided by the HisH subunit. This is Imidazole glycerol phosphate synthase subunit HisF from Mycolicibacterium vanbaalenii (strain DSM 7251 / JCM 13017 / BCRC 16820 / KCTC 9966 / NRRL B-24157 / PYR-1) (Mycobacterium vanbaalenii).